The chain runs to 64 residues: Disintegrin VB7B (64 aa).

Residues E1–N64 form the Disintegrin domain. Cystine bridges form between C10–C33, C24–C30, C29–C54, and C42–C61. Residues K46 to D48 carry the Cell attachment site; atypical (KGD) motif.

It belongs to the venom metalloproteinase (M12B) family. P-II subfamily. P-IIe sub-subfamily. In terms of assembly, heterodimer with VB7A; disulfide-linked. In terms of tissue distribution, expressed by the venom gland.

It localises to the secreted. Its function is as follows. Poor inhibitor of platelet aggregation. The disintegrin inhibits the adhesion of cells expressing the RGD-dependent integrin alpha-5/beta-1 (ITGA5/ITGB1) to immobilized fibronectin. Inhibition on alpha-IIb/beta-3 (ITGA2B/ITGB3) is low. The protein is Disintegrin VB7B of Vipera berus berus (Common viper).